The sequence spans 581 residues: DNA primase (581 aa).

The CHC2-type zinc finger occupies 40 to 64; sequence CPFHNEKTPSFTVNGEKQFYHCFGC. The Toprim domain maps to 259-341; it reads QRLLVVEGYM…GRQVRFMFLP (83 aa). Glu265, Asp309, and Asp311 together coordinate Mg(2+).

Belongs to the DnaG primase family. In terms of assembly, monomer. Interacts with DnaB. The cofactor is Zn(2+). Mg(2+) serves as cofactor.

The enzyme catalyses ssDNA + n NTP = ssDNA/pppN(pN)n-1 hybrid + (n-1) diphosphate.. RNA polymerase that catalyzes the synthesis of short RNA molecules used as primers for DNA polymerase during DNA replication. The chain is DNA primase from Salmonella typhimurium (strain LT2 / SGSC1412 / ATCC 700720).